A 122-amino-acid chain; its full sequence is Large ribosomal subunit protein uL14c (122 aa).

The protein belongs to the universal ribosomal protein uL14 family. As to quaternary structure, part of the 50S ribosomal subunit.

It is found in the plastid. The protein resides in the chloroplast. In terms of biological role, binds to 23S rRNA. This chain is Large ribosomal subunit protein uL14c, found in Nicotiana tomentosiformis (Tobacco).